Consider the following 340-residue polypeptide: Replication factor C subunit 5 (340 aa).

An N-acetylmethionine modification is found at methionine 1. Glycine 60–threonine 67 is a binding site for ATP.

This sequence belongs to the activator 1 small subunits family. In terms of assembly, subunit of the RFC complex, an heteropentameric complex consisting of a large subunit RFC1 and four small subunits RFC2, RFC3, RFC4 and RFC5; the RFC complex interacts with PCNA. Forms an heterotetrameric complex with RFC2, RFC3 and RFC4; this complex has ATPase activity but is not stimulated by PCNA. The heterotetramer of subunits RFC2, RFC3, RFC4 and RFC5 interacts with RAD17.

Its subcellular location is the nucleus. In terms of biological role, subunit of the replication factor C (RFC) complex which acts during elongation of primed DNA templates by DNA polymerases delta and epsilon, and is necessary for ATP-dependent loading of proliferating cell nuclear antigen (PCNA) onto primed DNA. This is Replication factor C subunit 5 (RFC5) from Homo sapiens (Human).